The sequence spans 302 residues: Putative S-adenosyl-L-methionine-dependent methyltransferase MAV_2803 (302 aa).

S-adenosyl-L-methionine is bound by residues Asp129 and 158–159; that span reads DL.

This sequence belongs to the UPF0677 family.

In terms of biological role, exhibits S-adenosyl-L-methionine-dependent methyltransferase activity. The protein is Putative S-adenosyl-L-methionine-dependent methyltransferase MAV_2803 of Mycobacterium avium (strain 104).